A 101-amino-acid chain; its full sequence is Small ribosomal subunit protein uS14 (101 aa).

This sequence belongs to the universal ribosomal protein uS14 family. Part of the 30S ribosomal subunit. Contacts proteins S3 and S10.

Functionally, binds 16S rRNA, required for the assembly of 30S particles and may also be responsible for determining the conformation of the 16S rRNA at the A site. This Methylorubrum extorquens (strain PA1) (Methylobacterium extorquens) protein is Small ribosomal subunit protein uS14.